Consider the following 247-residue polypeptide: MPRFRLIVEYDGTDYVGWQRQDNGPSVQGAIEKAVLSLTGETVRVRGAGRTDSGVHARGQVAHLDLTRAWKPYTLQNALNAHLSLAGERVSILEVEEAAADFDARFSAIRRHYLYRIISRRSPLALEARRAWWVPKALDHDAMHEAAQRLLGHHDFTTFRSANCQATSPMRTLDRLDVTRTGDLIEIRASAQSFLHNQIRSFAGSLKLVGESKWTPDNLQAALEARDRKACGPVAPPDGLYFMRVDY.

The active-site Nucleophile is the aspartate 52. Tyrosine 113 contacts substrate.

The protein belongs to the tRNA pseudouridine synthase TruA family. As to quaternary structure, homodimer.

It carries out the reaction uridine(38/39/40) in tRNA = pseudouridine(38/39/40) in tRNA. Formation of pseudouridine at positions 38, 39 and 40 in the anticodon stem and loop of transfer RNAs. The polypeptide is tRNA pseudouridine synthase A (Sinorhizobium medicae (strain WSM419) (Ensifer medicae)).